The following is a 359-amino-acid chain: Photosystem II protein D1 1 (359 aa).

3 helical membrane-spanning segments follow: residues 29–46 (YVGW…AATT), 118–133 (HFLI…EWEL), and 142–156 (WICV…AASA). Residue histidine 118 participates in chlorophyll a binding. Residue tyrosine 126 coordinates pheophytin a. Residues aspartate 170 and glutamate 189 each coordinate [CaMn4O5] cluster. Residues 197–218 (FHMMGVAGVFGGSLFSAMHGSL) traverse the membrane as a helical segment. Chlorophyll a is bound at residue histidine 198. A quinone is bound by residues histidine 215 and 264-265 (SF). Histidine 215 lines the Fe cation pocket. Residue histidine 272 participates in Fe cation binding. A helical membrane pass occupies residues 274–288 (FLAAWPVVGIWFTAL). The [CaMn4O5] cluster site is built by histidine 332, glutamate 333, aspartate 342, and alanine 344. Positions 345–359 (AAESTPVALQAPAIG) are excised as a propeptide.

The protein belongs to the reaction center PufL/M/PsbA/D family. In terms of assembly, PSII is composed of 1 copy each of membrane proteins PsbA, PsbB, PsbC, PsbD, PsbE, PsbF, PsbH, PsbI, PsbJ, PsbK, PsbL, PsbM, PsbT, PsbX, PsbY, PsbZ, Psb30/Ycf12, peripheral proteins PsbO, CyanoQ (PsbQ), PsbU, PsbV and a large number of cofactors. It forms dimeric complexes. Requires The D1/D2 heterodimer binds P680, chlorophylls that are the primary electron donor of PSII, and subsequent electron acceptors. It shares a non-heme iron and each subunit binds pheophytin, quinone, additional chlorophylls, carotenoids and lipids. D1 provides most of the ligands for the Mn4-Ca-O5 cluster of the oxygen-evolving complex (OEC). There is also a Cl(-1) ion associated with D1 and D2, which is required for oxygen evolution. The PSII complex binds additional chlorophylls, carotenoids and specific lipids. as cofactor. Post-translationally, tyr-161 forms a radical intermediate that is referred to as redox-active TyrZ, YZ or Y-Z. In terms of processing, C-terminally processed by CtpA; processing is essential to allow assembly of the oxygen-evolving complex and thus photosynthetic growth.

It localises to the cellular thylakoid membrane. It carries out the reaction 2 a plastoquinone + 4 hnu + 2 H2O = 2 a plastoquinol + O2. In terms of biological role, photosystem II (PSII) is a light-driven water:plastoquinone oxidoreductase that uses light energy to abstract electrons from H(2)O, generating O(2) and a proton gradient subsequently used for ATP formation. It consists of a core antenna complex that captures photons, and an electron transfer chain that converts photonic excitation into a charge separation. The D1/D2 (PsbA/PsbD) reaction center heterodimer binds P680, the primary electron donor of PSII as well as several subsequent electron acceptors. This chain is Photosystem II protein D1 1, found in Synechococcus sp. (strain WH7803).